A 434-amino-acid chain; its full sequence is Trigger factor (434 aa).

Residues 160 to 245 form the PPIase FKBP-type domain; that stretch reads GDKVKMNFVG…LTEVQAANLP (86 aa).

Belongs to the FKBP-type PPIase family. Tig subfamily.

Its subcellular location is the cytoplasm. It carries out the reaction [protein]-peptidylproline (omega=180) = [protein]-peptidylproline (omega=0). In terms of biological role, involved in protein export. Acts as a chaperone by maintaining the newly synthesized protein in an open conformation. Functions as a peptidyl-prolyl cis-trans isomerase. The protein is Trigger factor of Shewanella putrefaciens (strain CN-32 / ATCC BAA-453).